We begin with the raw amino-acid sequence, 222 residues long: Kinetochore protein Spc25 (222 aa).

Positions 51-100 (RHQRKVGKLQKVIMERREELDKRVSFIEELDRELEATKLRSLAMKDRIKQ) form a coiled coil.

The protein belongs to the SPC25 family. As to quaternary structure, component of the Ndc80 complex, which is composed of Ndc80, Nuf2 and Spc25.

It localises to the nucleus. The protein localises to the chromosome. Its subcellular location is the centromere. It is found in the kinetochore. Its function is as follows. Acts as a component of the essential kinetochore-associated Ndc80 complex, which is required for chromosome segregation and spindle checkpoint activity during meiosis and mitosis. Required for kinetochore integrity and the organization of stable microtubule binding sites in the outer plate of the kinetochore. Participates in SAC signaling that responds specifically to disruptions in spindle microtubule dynamics. The NDC80 complex synergistically enhances the affinity of the SKA1 complex for microtubules and may allow the NDC80 complex to track depolymerizing microtubules. The chain is Kinetochore protein Spc25 from Drosophila sechellia (Fruit fly).